A 313-amino-acid polypeptide reads, in one-letter code: MTSKLDQLKKFTTVVADTGDFGAIKSLEPEDATTNPSLLLKAASDANNAKMLGEAFDGSKGDIGLACDRFAVAIGQEILKVVPGRVSTEVDARLSFDTNALIERSERLIGLYDAAGIKRDRVLIKLAATWEGIRAAEKLEKDGIQTNLTLLFSFAQAVACAEAGVFLISPFVGRIYDWYKKSTGTDYTGAEDPGVQSVTRIYNYYKANDFKTVVMGASFRNLNQIEQLAGCDRLTISTDLLKKLAEDTGTLERKLTPDKAGEKRSDTVKNLTESQFRWASNEDAMATEKLAEGIRQFARDQEKLEALLSAKKA.

The active-site Schiff-base intermediate with substrate is the K125.

The protein belongs to the transaldolase family. Type 1 subfamily. In terms of assembly, homodimer.

The protein resides in the cytoplasm. It carries out the reaction D-sedoheptulose 7-phosphate + D-glyceraldehyde 3-phosphate = D-erythrose 4-phosphate + beta-D-fructose 6-phosphate. It participates in carbohydrate degradation; pentose phosphate pathway; D-glyceraldehyde 3-phosphate and beta-D-fructose 6-phosphate from D-ribose 5-phosphate and D-xylulose 5-phosphate (non-oxidative stage): step 2/3. Functionally, transaldolase is important for the balance of metabolites in the pentose-phosphate pathway. The sequence is that of Transaldolase from Pseudomonas syringae pv. syringae (strain B728a).